Here is a 226-residue protein sequence, read N- to C-terminus: Cell division protein SepF (226 aa).

A disordered region spans residues 20–116 (RAYDDAGYDK…ESLTYHTRDN (97 aa)). The segment covering 22–44 (YDDAGYDKGGYRESRYRSSRYSE) has biased composition (basic and acidic residues). A compositionally biased stretch (acidic residues) spans 45–56 (DFGDEDDEDEEA). Over residues 62-95 (RRGDRSRLERAAARSGDVDHNVEGEQPERVERAS) the composition is skewed to basic and acidic residues. Positions 97 to 111 (RSITRSAEPSESLTY) are enriched in polar residues.

It belongs to the SepF family. Homodimer. Interacts with FtsZ.

Its subcellular location is the cytoplasm. In terms of biological role, cell division protein that is part of the divisome complex and is recruited early to the Z-ring. Probably stimulates Z-ring formation, perhaps through the cross-linking of FtsZ protofilaments. Its function overlaps with FtsA. This Salinispora arenicola (strain CNS-205) protein is Cell division protein SepF.